Consider the following 67-residue polypeptide: Large ribosomal subunit protein uL29 (67 aa).

Belongs to the universal ribosomal protein uL29 family.

This chain is Large ribosomal subunit protein uL29, found in Magnetococcus marinus (strain ATCC BAA-1437 / JCM 17883 / MC-1).